The sequence spans 216 residues: Adenylate kinase (216 aa).

An ATP-binding site is contributed by 11–16 (GSGKGT). The interval 31–60 (ATGDLFRKAIECGDELGDTVKSYMERGELV) is NMP. AMP is bound by residues T32, R37, 58-60 (ELV), 86-89 (GFPR), and Q93. The tract at residues 127 to 163 (GRWVCRSCQSPYQSGCAEVTKGKCSRCQGGLYQRPDD) is LID. R128 is a binding site for ATP. Zn(2+) is bound by residues C131, C134, C150, and C153. The AMP site is built by R160 and R171. A199 contacts ATP.

Belongs to the adenylate kinase family. In terms of assembly, monomer.

The protein resides in the cytoplasm. The enzyme catalyses AMP + ATP = 2 ADP. It functions in the pathway purine metabolism; AMP biosynthesis via salvage pathway; AMP from ADP: step 1/1. Its function is as follows. Catalyzes the reversible transfer of the terminal phosphate group between ATP and AMP. Plays an important role in cellular energy homeostasis and in adenine nucleotide metabolism. The polypeptide is Adenylate kinase (Dehalococcoides mccartyi (strain CBDB1)).